The primary structure comprises 924 residues: MQIPKYENKPFKPPRRVGSNKYTQLKPTATAVTTAPISKAKVTVNLKRSISAGPTLNLAKKPNNLSSNENTRYFTIMYRKPTTKKHKTWSGDGYATLKASSDKLCFYNEAGKFLGSSMLPSDSDSLFETLFKAGSNEVQLDYELKENAEIRSAKEALSQNMGNPNPPTTSTTETVPSTKNDGGKYQMPLSQLFSLNTVKRFKSVTKQTNEHMTTVPKTSQNSKAKKYYPVFDVNKIDNPIVMNKNAAAEVDVIVDPLLGKFLRPHQREGVKFMYDCLMGLARPTIENPDIDCTTKSLVLENDSDISGCLLADDMGLGKTLMSITLIWTLIRQTPFASKVSCSQSGIPLTGLCKKILVVCPVTLIGNWKREFGKWLNLSRIGVLTLSSRNSPDMDKMAVRNFLKVQRTYQVLIIGYEKLLSVSEELEKNKHLIDMLVCDEGHRLKNGASKILNTLKSLDIRRKLLLTGTPIQNDLNEFFTIIDFINPGILGSFASFKRRFIIPITRARDTANRYNEELLEKGEERSKEMIEITKRFILRRTNAILEKYLPPKTDIILFCKPYSQQILAFKDILQGARLDFGRLTFSSSLGLITLLKKVCNSPGLVGSDPYYKSHIKDTQSQDSYSRSLNSGKLRVLMTLLEGIRKGTKEKVVVVSNYTQTLDIIENLMNMAGMSHCRLDGSIPAKQRDSIVTSFNRNPAIFGFLLSAKSGGVGLNLVGASRLILFDNDWNPSVDLQAMSRIHRDGQKKPCFIYRLVTTGCIDEKILQRQLMKNSLSQKFLGDSEMRNKESSNDDLFNKEDLKDLFSVHTDTKSNTHDLICSCDGLGEEIEYPETNQQQNTVELRKRSTTTWTSALDLQKKMNEAATNDDAKKSQYIRQCLVHYKHIDPARQDELFDEVITDSFTDLKDSITFAFVKPGEICLREQ.

Basic and acidic residues predominate over residues 1-10; the sequence is MQIPKYENKP. Disordered stretches follow at residues 1–21 and 155–183; these read MQIP…GSNK and EALS…NDGG. The segment covering 168 to 178 has biased composition (low complexity); it reads TTSTTETVPST. Positions 299-487 constitute a Helicase ATP-binding domain; it reads LENDSDISGC…FTIIDFINPG (189 aa). ATP is bound at residue 346–353; it reads IPLTGLCK. The DEGH box signature appears at 472–475; that stretch reads NDLN. A Glycyl lysine isopeptide (Lys-Gly) (interchain with G-Cter in ubiquitin) cross-link involves residue K615. The 160-residue stretch at 631–790 folds into the Helicase C-terminal domain; that stretch reads KLRVLMTLLE…DSEMRNKESS (160 aa).

Belongs to the SNF2/RAD54 helicase family. As to quaternary structure, interacts with RAD51 and DMC1.

It is found in the nucleus. The catalysed reaction is ATP + H2O = ADP + phosphate + H(+). In terms of biological role, involved in the recombinational repair of double-strand breaks (DSB) in DNA during mitosis and meiosis. Has DNA dependent ATPase activity. Promotes D-loop (displacement loop) formation with RAD51 recombinase. Modifies the topology of double-stranded DNA during the D-loop reaction to facilitate the invasion of the homologous duplex molecule by the initiating single-stranded DNA substrate. Required for adaptation from G2/M checkpoint arrest induced by a double strand break, by participating in monitoring the extent of single-stranded DNA produced by resection of DNA ends. This role is distinct from its roles in recombination. Promotes colocalization of RAD51 and DMC1 during meiotic recombination. Involved in crossover interference. The polypeptide is DNA repair and recombination protein RDH54 (RDH54) (Saccharomyces cerevisiae (strain RM11-1a) (Baker's yeast)).